A 315-amino-acid polypeptide reads, in one-letter code: Voltage-dependent calcium channel gamma-3 subunit (315 aa).

The next 4 helical transmembrane spans lie at 8–28, 104–124, 135–155, and 181–201; these read VQML…TIAV, SSVF…CVAA, ILSA…GIIV, and FGAF…HIYI. Positions 232–252 are disordered; it reads RRRSSSRSTEPRSRDLSPISK. Residue Ser248 is modified to Phosphoserine.

It belongs to the PMP-22/EMP/MP20 family. CACNG subfamily. The L-type calcium channel is composed of five subunits: alpha-1, alpha-2/delta, beta and gamma. Acts as an auxiliary subunit for AMPA-selective glutamate receptors (AMPARs). Found in a complex with GRIA1, GRIA2, GRIA3, GRIA4, CNIH2, CNIH3, CACNG2, CACNG4, CACNG5, CACNG7 and CACNG8. Interacts with AP4M1 and GRIA1; associates GRIA1 with the adaptor protein complex 4 (AP-4) to target GRIA1 to the somatodendritic compartment of neurons.

It is found in the membrane. In terms of biological role, regulates the trafficking and gating properties of AMPA-selective glutamate receptors (AMPARs). Promotes their targeting to the cell membrane and synapses and modulates their gating properties by slowing their rates of activation, deactivation and desensitization. Does not show subunit-specific AMPA receptor regulation and regulates all AMPAR subunits. Thought to stabilize the calcium channel in an inactivated (closed) state. The polypeptide is Voltage-dependent calcium channel gamma-3 subunit (CACNG3) (Bos taurus (Bovine)).